The following is a 462-amino-acid chain: UDP-N-acetylmuramoylalanine--D-glutamate ligase (462 aa).

Residue 125–131 coordinates ATP; the sequence is GSDGKTT.

This sequence belongs to the MurCDEF family.

It localises to the cytoplasm. It carries out the reaction UDP-N-acetyl-alpha-D-muramoyl-L-alanine + D-glutamate + ATP = UDP-N-acetyl-alpha-D-muramoyl-L-alanyl-D-glutamate + ADP + phosphate + H(+). The protein operates within cell wall biogenesis; peptidoglycan biosynthesis. Functionally, cell wall formation. Catalyzes the addition of glutamate to the nucleotide precursor UDP-N-acetylmuramoyl-L-alanine (UMA). The protein is UDP-N-acetylmuramoylalanine--D-glutamate ligase of Clostridium acetobutylicum (strain ATCC 824 / DSM 792 / JCM 1419 / IAM 19013 / LMG 5710 / NBRC 13948 / NRRL B-527 / VKM B-1787 / 2291 / W).